The primary structure comprises 432 residues: 5-hydroxybenzimidazole synthase BzaA (432 aa).

Residues Met-95, Tyr-124, His-163, Ser-185–Gly-187, and Asp-226–Arg-229 contribute to the substrate site. His-269 is a binding site for Zn(2+). Residue Phe-292 participates in substrate binding. Residue His-333 coordinates Zn(2+). Residues Cys-409, Cys-412, and Cys-416 each contribute to the [4Fe-4S] cluster site.

It belongs to the ThiC family. 5-hydroxybenzimidazole synthase subfamily. The cofactor is [4Fe-4S] cluster.

It carries out the reaction 5-amino-1-(5-phospho-beta-D-ribosyl)imidazole + AH2 + S-adenosyl-L-methionine = 5-hydroxybenzimidazole + 5'-deoxyadenosine + formate + L-methionine + A + NH4(+) + phosphate + 2 H(+). Its function is as follows. Together with BzaB, probably catalyzes the conversion of aminoimidazole ribotide (AIR) to 5-hydroxybenzimidazole (5-HBI) in a radical S-adenosyl-L-methionine (SAM)-dependent reaction. Is thus involved in the anaerobic biosynthesis of the benzimidazole lower axial ligand of the cobamide produced by M.thermoacetica. Requires BzaB for catalytic activity, as BzaA alone displays no activity. The chain is 5-hydroxybenzimidazole synthase BzaA from Moorella thermoacetica (strain ATCC 39073 / JCM 9320).